A 334-amino-acid chain; its full sequence is Ribosomal RNA large subunit methyltransferase F (334 aa).

Positions 1–25 (MPRPSSPRPDAERKSASPLHPRNRH) are disordered.

It belongs to the methyltransferase superfamily. METTL16/RlmF family.

It localises to the cytoplasm. The catalysed reaction is adenosine(1618) in 23S rRNA + S-adenosyl-L-methionine = N(6)-methyladenosine(1618) in 23S rRNA + S-adenosyl-L-homocysteine + H(+). Functionally, specifically methylates the adenine in position 1618 of 23S rRNA. The protein is Ribosomal RNA large subunit methyltransferase F of Pseudomonas paraeruginosa (strain DSM 24068 / PA7) (Pseudomonas aeruginosa (strain PA7)).